Consider the following 244-residue polypeptide: MIQAEPFEARLVAVRPLSPFVRELSFERADGKAFLFEAGQWVNLVLPLPGGEVKRAYSIASAPDGSPRFDLAVTRVEGGAGSEYLHRLEPGATLRAVGPHGLFTRDPGSPAPSLFVATGTGVTPLRSMLRASLRAGAAAHLWILFGARFEEDIIYRDELEALARGSDRIRYEITLSRGGPSWSGRRGYVQAHVPELYRELAGASGDPAPHVFICGLDRMVSLVRELARGELGVPRKHVHVERYD.

Residues 4 to 106 form the FAD-binding FR-type domain; that stretch reads AEPFEARLVA…VGPHGLFTRD (103 aa). FAD is bound by residues 55 to 58 and Thr120; that span reads RAYS.

The protein belongs to the ferredoxin--NADP reductase type 1 family. The cofactor is FAD.

It catalyses the reaction 2 reduced [4Fe-4S]-[ferredoxin] + NADP(+) + H(+) = 2 oxidized [4Fe-4S]-[ferredoxin] + NADPH. Its function is as follows. Transports electrons between NADPH and ferredoxin. Can transfer electrons to ferredoxins Fdx2 and Fdx8. Prefers NADPH to NADH. This Sorangium cellulosum (strain So ce56) (Polyangium cellulosum (strain So ce56)) protein is Ferredoxin--NADP reductase B.